The sequence spans 215 residues: Adenylate kinase (215 aa).

Position 10–15 (10–15 (GAGKGT)) interacts with ATP. Positions 30–59 (STGDMLRAAIKAGTPLGLEAKKIIDEGGLV) are NMP. AMP-binding positions include Thr31, Arg36, 57–59 (GLV), 85–88 (GFPR), and Gln92. Residues 122–159 (GRRVHLASGRTYHVTYNPPKTEGKDDVTGEDLIQRDDD) form an LID region. Residues Arg123 and 132 to 133 (TY) each bind ATP. Residues Arg156 and Arg167 each contribute to the AMP site. Residue Gln200 participates in ATP binding.

Belongs to the adenylate kinase family. As to quaternary structure, monomer.

Its subcellular location is the cytoplasm. The catalysed reaction is AMP + ATP = 2 ADP. It functions in the pathway purine metabolism; AMP biosynthesis via salvage pathway; AMP from ADP: step 1/1. Catalyzes the reversible transfer of the terminal phosphate group between ATP and AMP. Plays an important role in cellular energy homeostasis and in adenine nucleotide metabolism. The sequence is that of Adenylate kinase from Neisseria gonorrhoeae (strain ATCC 700825 / FA 1090).